The chain runs to 363 residues: UDP-N-acetylglucosamine--N-acetylmuramyl-(pentapeptide) pyrophosphoryl-undecaprenol N-acetylglucosamine transferase (363 aa).

Residues T12–G14, R166, S196, and Q291 contribute to the UDP-N-acetyl-alpha-D-glucosamine site.

The protein belongs to the glycosyltransferase 28 family. MurG subfamily.

It is found in the cell inner membrane. It carries out the reaction di-trans,octa-cis-undecaprenyl diphospho-N-acetyl-alpha-D-muramoyl-L-alanyl-D-glutamyl-meso-2,6-diaminopimeloyl-D-alanyl-D-alanine + UDP-N-acetyl-alpha-D-glucosamine = di-trans,octa-cis-undecaprenyl diphospho-[N-acetyl-alpha-D-glucosaminyl-(1-&gt;4)]-N-acetyl-alpha-D-muramoyl-L-alanyl-D-glutamyl-meso-2,6-diaminopimeloyl-D-alanyl-D-alanine + UDP + H(+). It functions in the pathway cell wall biogenesis; peptidoglycan biosynthesis. Its function is as follows. Cell wall formation. Catalyzes the transfer of a GlcNAc subunit on undecaprenyl-pyrophosphoryl-MurNAc-pentapeptide (lipid intermediate I) to form undecaprenyl-pyrophosphoryl-MurNAc-(pentapeptide)GlcNAc (lipid intermediate II). This chain is UDP-N-acetylglucosamine--N-acetylmuramyl-(pentapeptide) pyrophosphoryl-undecaprenol N-acetylglucosamine transferase, found in Legionella pneumophila (strain Lens).